The chain runs to 268 residues: Ribosomal RNA small subunit methyltransferase A (268 aa).

Asparagine 10, isoleucine 12, glycine 37, glutamate 58, aspartate 83, and asparagine 107 together coordinate S-adenosyl-L-methionine.

This sequence belongs to the class I-like SAM-binding methyltransferase superfamily. rRNA adenine N(6)-methyltransferase family. RsmA subfamily.

It localises to the cytoplasm. It catalyses the reaction adenosine(1518)/adenosine(1519) in 16S rRNA + 4 S-adenosyl-L-methionine = N(6)-dimethyladenosine(1518)/N(6)-dimethyladenosine(1519) in 16S rRNA + 4 S-adenosyl-L-homocysteine + 4 H(+). Functionally, specifically dimethylates two adjacent adenosines (A1518 and A1519) in the loop of a conserved hairpin near the 3'-end of 16S rRNA in the 30S particle. May play a critical role in biogenesis of 30S subunits. This chain is Ribosomal RNA small subunit methyltransferase A, found in Caldanaerobacter subterraneus subsp. tengcongensis (strain DSM 15242 / JCM 11007 / NBRC 100824 / MB4) (Thermoanaerobacter tengcongensis).